The primary structure comprises 547 residues: Chaperonin GroEL 1 (547 aa).

Residues 30–33 (TLGP), K51, 87–91 (DGTTT), G415, 479–481 (NAA), and D495 each bind ATP.

It belongs to the chaperonin (HSP60) family. In terms of assembly, forms a cylinder of 14 subunits composed of two heptameric rings stacked back-to-back. Interacts with the co-chaperonin GroES.

Its subcellular location is the cytoplasm. It carries out the reaction ATP + H2O + a folded polypeptide = ADP + phosphate + an unfolded polypeptide.. Its function is as follows. Together with its co-chaperonin GroES, plays an essential role in assisting protein folding. The GroEL-GroES system forms a nano-cage that allows encapsulation of the non-native substrate proteins and provides a physical environment optimized to promote and accelerate protein folding. In Vibrio parahaemolyticus serotype O3:K6 (strain RIMD 2210633), this protein is Chaperonin GroEL 1.